Consider the following 408-residue polypeptide: 8-amino-7-oxononanoate synthase (408 aa).

Arginine 20 lines the substrate pocket. Pyridoxal 5'-phosphate is bound at residue 119-120 (GY). A substrate-binding site is contributed by histidine 144. Pyridoxal 5'-phosphate contacts are provided by serine 190, histidine 218, and threonine 246. The residue at position 249 (lysine 249) is an N6-(pyridoxal phosphate)lysine. Position 372 (threonine 372) interacts with substrate.

The protein belongs to the class-II pyridoxal-phosphate-dependent aminotransferase family. BioF subfamily. Homodimer. The cofactor is pyridoxal 5'-phosphate.

It carries out the reaction 6-carboxyhexanoyl-[ACP] + L-alanine + H(+) = (8S)-8-amino-7-oxononanoate + holo-[ACP] + CO2. It functions in the pathway cofactor biosynthesis; biotin biosynthesis. Its function is as follows. Catalyzes the decarboxylative condensation of pimeloyl-[acyl-carrier protein] and L-alanine to produce 8-amino-7-oxononanoate (AON), [acyl-carrier protein], and carbon dioxide. This is 8-amino-7-oxononanoate synthase from Leptothrix cholodnii (strain ATCC 51168 / LMG 8142 / SP-6) (Leptothrix discophora (strain SP-6)).